The sequence spans 491 residues: Synaptotagmin-9 (491 aa).

Residues 1 to 52 lie on the Vesicular side of the membrane; the sequence is MPGARDALCHQALQLLAELCARGALEHDSCQDFIYHLRDRARPRLRDPDISV. Residues 9-31 form a cysteine motif region; it reads CHQALQLLAELCARGALEHDSCQ. Residues 53-73 form a helical membrane-spanning segment; that stretch reads SLLTLVVTACGLALFGVSLFV. Residues 74–491 are Cytoplasmic-facing; the sequence is SWKLCWVPWR…AHWHSLMEKR (418 aa). The segment covering 91 to 104 has biased composition (polar residues); that stretch reads SKDNNQEPLNYTDT. The segment at 91 to 147 is disordered; that stretch reads SKDNNQEPLNYTDTETNEQENSEDFLDPPTPCPDSSMKISHTSPDIPLSTQPGGQEN. Residues 105–116 show a composition bias toward acidic residues; that stretch reads ETNEQENSEDFL. Residues 127-144 show a composition bias toward polar residues; it reads MKISHTSPDIPLSTQPGG. Position 177 is a phosphoserine (Ser-177). C2 domains lie at 220-341 and 352-485; these read ACGK…ILWK and DLGE…AHWH. Asp-251, Asp-257, Asp-309, Phe-310, Asp-311, Ser-314, Asp-317, Asp-383, Asp-389, Asp-443, and Asp-445 together coordinate Ca(2+).

The protein belongs to the synaptotagmin family. As to quaternary structure, homodimer; disulfide-linked via the cysteine motif. Can also form heterodimers with SYT3, SYT6, SYT7 and SYT10. Interacts with DNAJC5 and SNAP25, but not with HSC70. The interaction with DNAJC5 is stimulated tenfold in presence of calcium while the interaction with SNAP25 is inhibited. The cofactor is Ca(2+).

It localises to the cytoplasmic vesicle. It is found in the secretory vesicle. Its subcellular location is the synaptic vesicle membrane. Its function is as follows. May be involved in Ca(2+)-dependent exocytosis of secretory vesicles through Ca(2+) and phospholipid binding to the C2 domain or may serve as Ca(2+) sensors in the process of vesicular trafficking and exocytosis. The sequence is that of Synaptotagmin-9 (Syt9) from Mus musculus (Mouse).